A 140-amino-acid polypeptide reads, in one-letter code: Putative septation protein SpoVG (140 aa).

Positions 88-127 (VAPQAGGLQGAEEPTAVEPAPQLQDESELPWEPGDDGEGA) are disordered. Residues 112-124 (DESELPWEPGDDG) show a composition bias toward acidic residues.

The protein belongs to the SpoVG family.

Its function is as follows. Could be involved in septation. This Symbiobacterium thermophilum (strain DSM 24528 / JCM 14929 / IAM 14863 / T) protein is Putative septation protein SpoVG.